Consider the following 336-residue polypeptide: tRNA N6-adenosine threonylcarbamoyltransferase (336 aa).

Fe cation contacts are provided by histidine 114 and histidine 118. Residues 136–140, aspartate 169, glycine 182, aspartate 186, and asparagine 275 each bind substrate; that span reads LVSGG. Aspartate 302 lines the Fe cation pocket.

The protein belongs to the KAE1 / TsaD family. It depends on Fe(2+) as a cofactor.

The protein resides in the cytoplasm. The enzyme catalyses L-threonylcarbamoyladenylate + adenosine(37) in tRNA = N(6)-L-threonylcarbamoyladenosine(37) in tRNA + AMP + H(+). Functionally, required for the formation of a threonylcarbamoyl group on adenosine at position 37 (t(6)A37) in tRNAs that read codons beginning with adenine. Is involved in the transfer of the threonylcarbamoyl moiety of threonylcarbamoyl-AMP (TC-AMP) to the N6 group of A37, together with TsaE and TsaB. TsaD likely plays a direct catalytic role in this reaction. The sequence is that of tRNA N6-adenosine threonylcarbamoyltransferase from Streptococcus agalactiae serotype V (strain ATCC BAA-611 / 2603 V/R).